The sequence spans 188 residues: Xanthine phosphoribosyltransferase (188 aa).

Xanthine contacts are provided by Leu-20 and Asn-27. Residue 127–131 participates in 5-phospho-alpha-D-ribose 1-diphosphate binding; sequence AHGEA. Lys-155 contacts xanthine.

This sequence belongs to the purine/pyrimidine phosphoribosyltransferase family. Xpt subfamily. As to quaternary structure, homodimer.

It is found in the cytoplasm. The catalysed reaction is XMP + diphosphate = xanthine + 5-phospho-alpha-D-ribose 1-diphosphate. Its pathway is purine metabolism; XMP biosynthesis via salvage pathway; XMP from xanthine: step 1/1. In terms of biological role, converts the preformed base xanthine, a product of nucleic acid breakdown, to xanthosine 5'-monophosphate (XMP), so it can be reused for RNA or DNA synthesis. The protein is Xanthine phosphoribosyltransferase of Heliobacterium modesticaldum (strain ATCC 51547 / Ice1).